Here is a 631-residue protein sequence, read N- to C-terminus: tRNA uridine 5-carboxymethylaminomethyl modification enzyme MnmG (631 aa).

Position 13-18 (Gly13–Gly18) interacts with FAD. Gly273–Phe287 provides a ligand contact to NAD(+).

Belongs to the MnmG family. Homodimer. Heterotetramer of two MnmE and two MnmG subunits. It depends on FAD as a cofactor.

The protein localises to the cytoplasm. NAD-binding protein involved in the addition of a carboxymethylaminomethyl (cmnm) group at the wobble position (U34) of certain tRNAs, forming tRNA-cmnm(5)s(2)U34. The chain is tRNA uridine 5-carboxymethylaminomethyl modification enzyme MnmG from Chromohalobacter salexigens (strain ATCC BAA-138 / DSM 3043 / CIP 106854 / NCIMB 13768 / 1H11).